A 724-amino-acid chain; its full sequence is MSPLSSLPPKTFISSFHCHSVTRLRRSVTARTMSSQSSQRVFQLRQDPLTGNSEWIVIEDNDQPGTSTDGLLATTSYLDMLNDSRRNIAYRLAIEKTITEPCHVLDIGAGTGLLSMMAVRAMRGDSKGMVTACESYLPMVKLMRKVMHKNGMTKNINLINKRSDELKVGSEDIASRADVLVSEILDSELLGEGLIPSLQHAHDMLLVDNPKTVPYRATTYCQLVESTFLCNLQDLRNNEAKTSDGVRLVPPGLESLFGIKSQQYSMHVDAIEKEIKLLSEPVKIFEFDFWKRPESNGELDVHIEAKTTGSVHAIISWWVLQLDSEGTIFYSTAPRWIDSNSEIGVRDWCDHWKQCVWFTPGTGVSISKGEKVHLHASHTCTNILYNLKKTQSLTHERTHFPLSTGDLHLTLPPERVAIYGDSIYRQSLFEATRKALQGKSYPQCLVIDDSLLLPLMALHISNRSRVLSLSPGLQENAARYFEAIADSNGFSKDRFEYFRDGKTNLAKAYPGKIDLLIGEPYYSGLENGLPWQNLRFWKDRTLLDSVLSEDAVVMPYKGVLRGCAMYLPDLWKSRCCLGSVEGFDHTLVNTTLGGCGDLPSGKDSPCLPFFIWQCGETKILSKEFTVMEFDFSKPITGPCSGEVQIEFIKPGVCHGIALWMDWVMDEENSTVISTGPDDKYWKQGVKLLGKPVTVRMEGPSSSIGIQASLDLSSNSELIVTHTIS.

2 consecutive SAM-dependent MTase PRMT-type domains span residues 61–388 (NDQP…YNLK) and 395–721 (HERT…IVTH). Catalysis depends on residues E183 and E192.

This sequence belongs to the class I-like SAM-binding methyltransferase superfamily. Protein arginine N-methyltransferase family. PRMT7 subfamily.

Its function is as follows. Arginine methyltransferase that can both catalyze the formation of omega-N monomethylarginine (MMA) and symmetrical dimethylarginine (sDMA). The polypeptide is Protein arginine N-methyltransferase 1.6 (PRMT16) (Arabidopsis thaliana (Mouse-ear cress)).